The chain runs to 294 residues: ATP synthase gamma chain (294 aa).

It belongs to the ATPase gamma chain family. F-type ATPases have 2 components, CF(1) - the catalytic core - and CF(0) - the membrane proton channel. CF(1) has five subunits: alpha(3), beta(3), gamma(1), delta(1), epsilon(1). CF(0) has three main subunits: a, b and c.

The protein resides in the cell inner membrane. Functionally, produces ATP from ADP in the presence of a proton gradient across the membrane. The gamma chain is believed to be important in regulating ATPase activity and the flow of protons through the CF(0) complex. This chain is ATP synthase gamma chain, found in Rhizobium johnstonii (strain DSM 114642 / LMG 32736 / 3841) (Rhizobium leguminosarum bv. viciae).